The sequence spans 240 residues: Glycerol uptake facilitator protein 3 (240 aa).

2 helical membrane passes run 11 to 31 (LGEF…VAGV) and 41 to 61 (AGWV…VYAS). Positions 70-72 (NPA) match the NPA 1 motif. The next 3 helical transmembrane spans lie at 88–108 (VIPY…VVWL), 137–157 (FWNF…LLAF), and 162–182 (FTAG…GLSL). The short motif at 191–193 (NPA) is the NPA 2 element. Residues 219-239 (WVPIAGPLVGGALGALLFNVL) form a helical membrane-spanning segment.

The protein belongs to the MIP/aquaporin (TC 1.A.8) family.

The protein resides in the cell membrane. Its function is as follows. Transporter that facilitates the transmembrane diffusion of water, dihydroxyacetone, glycerol and H(2)O(2). Is not permeable to urea and D/L-lactic acid. This Lactiplantibacillus plantarum (strain ATCC BAA-793 / NCIMB 8826 / WCFS1) (Lactobacillus plantarum) protein is Glycerol uptake facilitator protein 3.